Reading from the N-terminus, the 175-residue chain is ATP synthase subunit delta (175 aa).

The protein belongs to the ATPase delta chain family. In terms of assembly, F-type ATPases have 2 components, F(1) - the catalytic core - and F(0) - the membrane proton channel. F(1) has five subunits: alpha(3), beta(3), gamma(1), delta(1), epsilon(1). F(0) has three main subunits: a(1), b(2) and c(10-14). The alpha and beta chains form an alternating ring which encloses part of the gamma chain. F(1) is attached to F(0) by a central stalk formed by the gamma and epsilon chains, while a peripheral stalk is formed by the delta and b chains.

Its subcellular location is the cell inner membrane. In terms of biological role, f(1)F(0) ATP synthase produces ATP from ADP in the presence of a proton or sodium gradient. F-type ATPases consist of two structural domains, F(1) containing the extramembraneous catalytic core and F(0) containing the membrane proton channel, linked together by a central stalk and a peripheral stalk. During catalysis, ATP synthesis in the catalytic domain of F(1) is coupled via a rotary mechanism of the central stalk subunits to proton translocation. Functionally, this protein is part of the stalk that links CF(0) to CF(1). It either transmits conformational changes from CF(0) to CF(1) or is implicated in proton conduction. In Xanthomonas axonopodis pv. citri (strain 306), this protein is ATP synthase subunit delta.